A 108-amino-acid polypeptide reads, in one-letter code: SRTLLLERGRWWEEETDPGVRGIDQSLANASQLGKGLGTKLVRALVELLFNDPEVTKIQTDPSPSNLRAIRCYEKAGFERQGTVTTPDGPAVYMVQTRQAFERTRSDA.

The N-acetyltransferase domain occupies 1–99 (SRTLLLERGR…PAVYMVQTRQ (99 aa)).

The sequence is that of Kanamycin resistance protein from Rhizobium radiobacter (Agrobacterium tumefaciens).